Consider the following 636-residue polypeptide: Translation factor GUF1 homolog, chloroplastic (636 aa).

Residues 31-212 (NLARNFSIIA…AIVTKIPPPQ (182 aa)) enclose the tr-type G domain. GTP contacts are provided by residues 40-47 (AHIDHGKS), 105-109 (DTPGH), and 159-162 (NKID).

The protein belongs to the TRAFAC class translation factor GTPase superfamily. Classic translation factor GTPase family. LepA subfamily.

It localises to the plastid. The protein localises to the chloroplast. The catalysed reaction is GTP + H2O = GDP + phosphate + H(+). Its function is as follows. Promotes chloroplast protein synthesis. May act as a fidelity factor of the translation reaction, by catalyzing a one-codon backward translocation of tRNAs on improperly translocated ribosomes. The chain is Translation factor GUF1 homolog, chloroplastic from Oryza sativa subsp. indica (Rice).